We begin with the raw amino-acid sequence, 512 residues long: Maturase K (512 aa).

This sequence belongs to the intron maturase 2 family. MatK subfamily.

It localises to the plastid. The protein localises to the chloroplast. Its function is as follows. Usually encoded in the trnK tRNA gene intron. Probably assists in splicing its own and other chloroplast group II introns. The polypeptide is Maturase K (Platanus occidentalis (Sycamore)).